The primary structure comprises 397 residues: Argininosuccinate synthase (397 aa).

An ATP-binding site is contributed by 8 to 16 (AYSGGLDTS). Tyr-87 lines the L-citrulline pocket. Gly-117 serves as a coordination point for ATP. Positions 119, 123, and 124 each coordinate L-aspartate. Asn-123 lines the L-citrulline pocket. Positions 127, 175, 259, and 271 each coordinate L-citrulline.

This sequence belongs to the argininosuccinate synthase family. Type 1 subfamily. As to quaternary structure, homotetramer.

Its subcellular location is the cytoplasm. The enzyme catalyses L-citrulline + L-aspartate + ATP = 2-(N(omega)-L-arginino)succinate + AMP + diphosphate + H(+). It participates in amino-acid biosynthesis; L-arginine biosynthesis; L-arginine from L-ornithine and carbamoyl phosphate: step 2/3. The sequence is that of Argininosuccinate synthase from Streptomyces griseus subsp. griseus (strain JCM 4626 / CBS 651.72 / NBRC 13350 / KCC S-0626 / ISP 5235).